The primary structure comprises 182 residues: Molybdopterin synthase catalytic subunit (182 aa).

Residues 119–120 (HR), lysine 135, and 142–144 (KRE) each bind substrate. The interval 152–182 (VWRANRDGAPGQRIDTAEPAVGAGSGGEIDD) is disordered.

Belongs to the MoaE family. MOCS2B subfamily. In terms of assembly, heterotetramer; composed of 2 small (MOCS2A) and 2 large (MOCS2B) subunits.

The protein localises to the cytoplasm. The enzyme catalyses 2 [molybdopterin-synthase sulfur-carrier protein]-C-terminal-Gly-aminoethanethioate + cyclic pyranopterin phosphate + H2O = molybdopterin + 2 [molybdopterin-synthase sulfur-carrier protein]-C-terminal Gly-Gly + 2 H(+). Its pathway is cofactor biosynthesis; molybdopterin biosynthesis. Catalytic subunit of the molybdopterin synthase complex, a complex that catalyzes the conversion of precursor Z into molybdopterin. Acts by mediating the incorporation of 2 sulfur atoms from thiocarboxylated MOCS2A into precursor Z to generate a dithiolene group. This Pyricularia oryzae (strain 70-15 / ATCC MYA-4617 / FGSC 8958) (Rice blast fungus) protein is Molybdopterin synthase catalytic subunit.